A 365-amino-acid chain; its full sequence is Aminomethyltransferase (365 aa).

The protein belongs to the GcvT family. The glycine cleavage system is composed of four proteins: P, T, L and H.

The enzyme catalyses N(6)-[(R)-S(8)-aminomethyldihydrolipoyl]-L-lysyl-[protein] + (6S)-5,6,7,8-tetrahydrofolate = N(6)-[(R)-dihydrolipoyl]-L-lysyl-[protein] + (6R)-5,10-methylene-5,6,7,8-tetrahydrofolate + NH4(+). The glycine cleavage system catalyzes the degradation of glycine. The protein is Aminomethyltransferase of Parafrankia sp. (strain EAN1pec).